Consider the following 1610-residue polypeptide: Protein TASOR (1610 aa).

A disordered region spans residues 1 to 96; sequence MATAAETEAP…PERPFRRSFQ (96 aa). A2 carries the N-acetylalanine modification. Over residues 41–51 the composition is skewed to gly residues; sequence NGGGDGGGGAG. Over residues 52-61 the composition is skewed to low complexity; it reads PEETAAAEAA. Position 339 is a phosphoserine (S339). A Glycyl lysine isopeptide (Lys-Gly) (interchain with G-Cter in SUMO2) cross-link involves residue K581. Phosphoserine occurs at positions 628, 631, and 668. Disordered stretches follow at residues 631–671 and 687–710; these read SDYE…SLDY and KKNVGGDPDPEDTKSKNVLKRKLE. Composition is skewed to basic and acidic residues over residues 652 to 671 and 697 to 710; these read NSRDETTEPEQQKSSHSLDY and EDTKSKNVLKRKLE. At S793 the chain carries Phosphoserine. Residues K816 and K825 each participate in a glycyl lysine isopeptide (Lys-Gly) (interchain with G-Cter in SUMO2) cross-link. Phosphoserine is present on S836. K866 is covalently cross-linked (Glycyl lysine isopeptide (Lys-Gly) (interchain with G-Cter in SUMO2)). A disordered region spans residues 915 to 941; it reads TGGNAGSPEDQHGKHGEKQTPDTLKGT. Phosphoserine is present on residues S921 and K928. Residues 923 to 934 are compositionally biased toward basic and acidic residues; that stretch reads EDQHGKHGEKQT. A Phosphothreonine modification is found at T1004. Phosphoserine occurs at positions 1059 and 1508.

Belongs to the TASOR family. Component of the HUSH complex; at least composed of TASOR, PPHLN1 and MPHOSPH8. Interacts with MORC2; the interaction associateS MORC2 with the HUSH complex which recruits MORC2 to heterochromatic loci. Interacts with ZNF638; leading to recruitment of the HUSH complex to unintegrated retroviral DNA. Interacts with INPP5A, EML1, SV1L, GPSM2, ITGB3BP, CNTN1, ETFA, PSMD8, S100A10, MPHOSPH8, TMEM100, ALB, PARPBP, HCFC2, NCBP1 and SETDB1. In terms of tissue distribution, present in skin, brain and testis (at protein level). Ubiquitously expressed at low levels in the majority of the organs, expressed at higher levels in kidneys, spleen, thymus, seminal vesicles, uterus, and ovaries and its expression is almost six times higher in male tissues than in females. Highly expressed in seminiferous tubules with a strong signal in Sertoli cells, spermatogonia, and spermatocytes.

The protein resides in the nucleus. It localises to the chromosome. Functionally, component of the HUSH complex, a multiprotein complex that mediates epigenetic repression. The HUSH complex is recruited to genomic loci rich in H3K9me3 and is required to maintain transcriptional silencing by promoting recruitment of SETDB1, a histone methyltransferase that mediates further deposition of H3K9me3, as well as MORC2. Also represses L1 retrotransposons in collaboration with MORC2 and, probably, SETDB1, the silencing is dependent of repressive epigenetic modifications, such as H3K9me3 mark. Silencing events often occur within introns of transcriptionally active genes, and lead to the down-regulation of host gene expression. The HUSH complex is also involved in the silencing of unintegrated retroviral DNA by being recruited by ZNF638: some part of the retroviral DNA formed immediately after infection remains unintegrated in the host genome and is transcriptionally repressed. Plays a crucial role in early embryonic development. Involved in the organization of spindle poles and spindle apparatus assembly during zygotic division. Plays an important role in maintaining epiblast fitness or potency. The protein is Protein TASOR of Mus musculus (Mouse).